The following is a 574-amino-acid chain: E3 ubiquitin-protein ligase TRIM23 (574 aa).

The RING-type; degenerate zinc finger occupies 31–76 (CGVCEDVFSLQGDKVPRLLLCGHTVCHDCLTRLPLHGRAIRCPFDR). The B box-type; degenerate zinc-finger motif lies at 122-168 (ESIIRCDEDEAHVASVYCTVCATHLCSDCSQVTHSTKTLAKHRRVPL). Residues 352–379 (RVVLAKQEITRLLETLQKQQQQFTEVAD) are a coiled coil. Positions 390 to 574 (TFTKDNRVHI…LVAAGVLDVA (185 aa)) are ARF-like. Residues 411–418 (GLDGAGKT), 454–458 (DVGGK), and 513–516 (NKQD) each bind GTP.

This sequence in the C-terminal section; belongs to the small GTPase superfamily. Arf family. As to quaternary structure, homodimer. Interacts with PSCD1. Interacts with UBE2D2. Interacts with TBK1 (via N-terminal kinase domain) and p62/SQSTM1.

Its subcellular location is the cytoplasm. The protein localises to the endomembrane system. It localises to the golgi apparatus membrane. The protein resides in the lysosome membrane. It carries out the reaction S-ubiquitinyl-[E2 ubiquitin-conjugating enzyme]-L-cysteine + [acceptor protein]-L-lysine = [E2 ubiquitin-conjugating enzyme]-L-cysteine + N(6)-ubiquitinyl-[acceptor protein]-L-lysine.. Its pathway is protein modification; protein ubiquitination. In terms of biological role, acts as an E3 ubiquitin-protein ligase. Plays an essential role in autophagy activation during viral infection. Mechanistically, activates TANK-binding kinase 1/TBK1 by facilitating its dimerization and ability to phosphorylate the selective autophagy receptor SQSTM1. In order to achieve this function, TRIM23 mediates 'Lys-27'-linked auto-ubiquitination of its ADP-ribosylation factor (ARF) domain to induce its GTPase activity and its recruitment to autophagosomes. The polypeptide is E3 ubiquitin-protein ligase TRIM23 (Trim23) (Mus musculus (Mouse)).